Here is a 467-residue protein sequence, read N- to C-terminus: MLNLYMWKLSRSQVYQASLLFGSRVISALAFTNTGLVLHGPRRWYTTDNGFLLHRDSKVSLADYIHESTFDPSKGYYSRLWTGSTNNLSHSVHVLRKEGHKCSKEFDPFLHGIPIPQKALNIYEKQRSLFSESISNYLVLQYKLRYFPVFDLKIYDFHSGTGIIALDILDYLYKNHLEVYGRTTYNIVLHNSWQASWFKSMLTSVRYAKHGDHIDIYVSDPLTWNHTDTNPCFVLALQVISSFGHDLFRQSNGAMMMERCWLGPEHFLNEFFTLNTHQKVSSLNYHLAFQQARINVQQGFSDSRAKRYFSGVKQVFWSFFSTQKLTYYPTKAIRFFERLSKQFPHHSLLLMDVCHVDKSLPGINAPSVLSMENDFSTKKMSSNIGHVFQNETVKYVFPTPLYLVSDILQLATHNRSFICSLPHFLRRWSNEHGRKFFVPVEPSSKNLKVPYSFNNYYVVSSMPTYYY.

This sequence belongs to the NDUFAF7 family.

Its subcellular location is the mitochondrion. It catalyses the reaction L-arginyl-[protein] + 2 S-adenosyl-L-methionine = N(omega),N(omega)'-dimethyl-L-arginyl-[protein] + 2 S-adenosyl-L-homocysteine + 2 H(+). Its function is as follows. Arginine methyltransferase involved in the assembly or stability of mitochondrial NADH:ubiquinone oxidoreductase complex (complex I). The chain is Protein arginine methyltransferase NDUFAF7 homolog, mitochondrial from Schizosaccharomyces pombe (strain 972 / ATCC 24843) (Fission yeast).